We begin with the raw amino-acid sequence, 231 residues long: PIAGSMVLAAILLKLGGYGIIRMVQILPTTKTDLFIPFIVLALWGATLANLTCLQQTDLKSLIAYSSISHMGLVVAAVIIQSPWGLSGAMALMIAHGFTSSALFCLANTTYERTHTRILILTRGFHNILPMATTWWLLTNLMNIATPPTMNFTSELLIVSTLFNWCPTTIIMLGLSMLITTTYSLHMFLSTQMGSPMLNYQTEPSHSREHLLMILHIIPLLMISMKPELVI.

The next 7 helical transmembrane spans lie at 1–21 (PIAG…YGII), 34–54 (LFIP…LTCL), 61–80 (SLIA…AVII), 84–106 (WGLS…LFCL), 118–138 (ILIL…WWLL), 156–176 (LLIV…LGLS), and 211–231 (LLMI…ELVI).

Belongs to the complex I subunit 4 family.

The protein localises to the mitochondrion membrane. The enzyme catalyses a ubiquinone + NADH + 5 H(+)(in) = a ubiquinol + NAD(+) + 4 H(+)(out). Core subunit of the mitochondrial membrane respiratory chain NADH dehydrogenase (Complex I) that is believed to belong to the minimal assembly required for catalysis. Complex I functions in the transfer of electrons from NADH to the respiratory chain. The immediate electron acceptor for the enzyme is believed to be ubiquinone. The chain is NADH-ubiquinone oxidoreductase chain 4 (MT-ND4) from Hypnale hypnale (Merrem's hump-nosed viper).